Consider the following 151-residue polypeptide: Large ribosomal subunit protein bL9 (151 aa).

Belongs to the bacterial ribosomal protein bL9 family.

Binds to the 23S rRNA. In Mycolicibacterium smegmatis (strain ATCC 700084 / mc(2)155) (Mycobacterium smegmatis), this protein is Large ribosomal subunit protein bL9.